Here is a 1082-residue protein sequence, read N- to C-terminus: MAARRITQETFDAVLQEKAKRYHMDASGEAVSETLQFKAQDLLRAVPRSRAEMYDDVHSDGRYSLSGSVAHSRDAGREGLRSDVFPGPSFRSSNPSISDDSYFRKECGRDLEFSHSDSRDQVIGHRKLGHFRSQDWKFALRGSWEQDFGHPVSQESSWSQEYSFGPSAVLGDFGSSRLIEKECLEKESRDYDVDHPGEADSVLRGGSQVQARGRALNIVDQEGSLLGKGETQGLLTAKGGVGKLVTLRNVSTKKIPTVNRITPKTQGTNQIQKNTPSPDVTLGTNPGTEDIQFPIQKIPLGLDLKNLRLPRRKMSFDIIDKSDVFSRFGIEIIKWAGFHTIKDDIKFSQLFQTLFELETETCAKMLASFKCSLKPEHRDFCFFTIKFLKHSALKTPRVDNEFLNMLLDKGAVKTKNCFFEIIKPFDKYIMRLQDRLLKSVTPLLMACNAYELSVKMKTLSNPLDLALALETTNSLCRKSLALLGQTFSLASSFRQEKILEAVGLQDIAPSPAAFPNFEDSTLFGREYIDHLKAWLVSSGCPLQVKKAEPEPMREEEKMIPPTKPEIQAKAPSSLSDAVPQRADHRVVGTIDQLVKRVIEGSLSPKERTLLKEDPAYWFLSDENSLEYKYYKLKLAEMQRMSENLRGADQKPTSADCAVRAMLYSRAVRNLKKKLLPWQRRGLLRAQGLRGWKARRATTGTQTLLSSGTRLKHHGRQAPGLSQAKPSLPDRNDAAKDCPPDPVGPSPQDPSLEASGPSPKPAGVDISEAPQTSSPCPSADIDMKTMETAEKLARFVAQVGPEIEQFSIENSTDNPDLWFLHDQNSSAFKFYRKKVFELCPSICFTSSPHNLHTGGGDTTGSQESPVDLMEGEAEFEDEPPPREAELESPEVMPEEEDEDDEDGGEEAPAPGGAGKSEGSTPADGLPGEAAEDDLAGAPALSQASSGTCFPRKRISSKSLKVGMIPAPKRVCLIQEPKVHEPVRIAYDRPRGRPMSKKKKPKDLDFAQQKLTDKNLGFQMLQKMGWKEGHGLGSLGKGIREPVSVGTPSEGEGLGADGQEHKEDTFDVFRQRMMQMYRHKRANK.

Position 7 is a phosphothreonine (Thr-7). Positions 65–97 are disordered; the sequence is LSGSVAHSRDAGREGLRSDVFPGPSFRSSNPSI. A compositionally biased stretch (basic and acidic residues) spans 71–81; that stretch reads HSRDAGREGLR. Residues Ser-96 and Ser-224 each carry the phosphoserine modification. Lys-228 participates in a covalent cross-link: Glycyl lysine isopeptide (Lys-Gly) (interchain with G-Cter in SUMO2). Thr-275 carries the phosphothreonine modification. Position 277 is a phosphoserine (Ser-277). Lys-305 is covalently cross-linked (Glycyl lysine isopeptide (Lys-Gly) (interchain with G-Cter in SUMO2)). 3 positions are modified to phosphoserine: Ser-315, Ser-573, and Ser-603. Residues 590–633 form an SURP motif 1 repeat; the sequence is IDQLVKRVIEGSLSPKERTLLKEDPAYWFLSDENSLEYKYYKLK. Lys-650 is covalently cross-linked (Glycyl lysine isopeptide (Lys-Gly) (interchain with G-Cter in SUMO2)). The tract at residues 694 to 779 is disordered; the sequence is RRATTGTQTL…QTSSPCPSAD (86 aa). The span at 697-708 shows a compositional bias: low complexity; sequence TTGTQTLLSSGT. The span at 727–738 shows a compositional bias: basic and acidic residues; it reads LPDRNDAAKDCP. Phosphoserine occurs at positions 754 and 757. Residues 787–830 form an SURP motif 2 repeat; sequence TAEKLARFVAQVGPEIEQFSIENSTDNPDLWFLHDQNSSAFKFY. Disordered stretches follow at residues 849–930, 982–1002, and 1030–1061; these read NLHT…EAAE, RIAY…PKDL, and LGSL…EHKE. Ser-863 is subject to Phosphoserine. Composition is skewed to acidic residues over residues 868–877 and 885–904; these read MEGEAEFEDE and LESP…DGGE. Residues 990-999 show a composition bias toward basic residues; sequence GRPMSKKKKP. Positions 995-1000 match the Nuclear localization signal motif; it reads KKKKPK. The 47-residue stretch at 1011–1057 folds into the G-patch domain; that stretch reads DKNLGFQMLQKMGWKEGHGLGSLGKGIREPVSVGTPSEGEGLGADGQ.

Detected in adult testis, and in fetal brain and kidney.

It is found in the nucleus. In terms of biological role, may play a role in mRNA splicing. This chain is SURP and G-patch domain-containing protein 2 (SUGP2), found in Homo sapiens (Human).